The chain runs to 883 residues: Protein P (883 aa).

The tract at residues 1–183 (MHPFSRLFRN…GKPYSWEHRQ (183 aa)) is terminal protein domain (TP). The spacer stretch occupies residues 184 to 386 (LVQHNGQQHK…YCIHHIVSSL (203 aa)). Residues 298 to 344 (RNSGHTTWFSSASNSNKSRSREKAYSSNSTSKRYSPPLNYEKSDFSS) are disordered. A polymerase/reverse transcriptase domain (RT) region spans residues 387 to 728 (DDWGPCTVTG…YEELWPVVRQ (342 aa)). Residues 397 to 638 (DVTIKSPRTP…NHLHFMGYVI (242 aa)) form the Reverse transcriptase domain. Mg(2+) is bound by residues Asp469, Asp589, and Asp590.

Belongs to the hepadnaviridae P protein family.

The catalysed reaction is DNA(n) + a 2'-deoxyribonucleoside 5'-triphosphate = DNA(n+1) + diphosphate. It carries out the reaction Endonucleolytic cleavage to 5'-phosphomonoester.. Activated by host HSP70 and HSP40 in vitro to be able to bind the epsilon loop of the pgRNA. Because deletion of the RNase H region renders the protein partly chaperone-independent, the chaperones may be needed indirectly to relieve occlusion of the RNA-binding site by this domain. Inhibited by several reverse-transcriptase inhibitors: Lamivudine, Adefovir and Entecavir. Functionally, multifunctional enzyme that converts the viral RNA genome into dsDNA in viral cytoplasmic capsids. This enzyme displays a DNA polymerase activity that can copy either DNA or RNA templates, and a ribonuclease H (RNase H) activity that cleaves the RNA strand of RNA-DNA heteroduplexes in a partially processive 3'- to 5'-endonucleasic mode. Neo-synthesized pregenomic RNA (pgRNA) are encapsidated together with the P protein, and reverse-transcribed inside the nucleocapsid. Initiation of reverse-transcription occurs first by binding the epsilon loop on the pgRNA genome, and is initiated by protein priming, thereby the 5'-end of (-)DNA is covalently linked to P protein. Partial (+)DNA is synthesized from the (-)DNA template and generates the relaxed circular DNA (RC-DNA) genome. After budding and infection, the RC-DNA migrates in the nucleus, and is converted into a plasmid-like covalently closed circular DNA (cccDNA). The activity of P protein does not seem to be necessary for cccDNA generation, and is presumably released from (+)DNA by host nuclear DNA repair machinery. This chain is Protein P, found in Woodchuck hepatitis B virus (isolate 2) (WHV).